Reading from the N-terminus, the 654-residue chain is Endoplasmic reticulum chaperone BiP (654 aa).

Positions 1 to 18 (MKFPMVAAALLLLCAVRA) are cleaved as a signal peptide. The tract at residues 1–80 (MKFPMVAAAL…EGERLIGDAA (80 aa)) is required for interaction with ELAPOR1. Position 36 to 39 (36 to 39 (GTTY)) interacts with ATP. Ser-86 carries the phosphoserine modification. Residue Lys-96 coordinates ATP. At Lys-125 the chain carries N6-acetyllysine. The nucleotide-binding (NBD) stretch occupies residues 125-280 (KPYIQVDIGG…KKKTGKDVRK (156 aa)). Tyr-160 is subject to 3'-nitrotyrosine. Lys-213 carries the N6-acetyllysine modification. 227–229 (GGT) lines the ATP pocket. An N6-acetyllysine modification is found at Lys-271. 293 to 300 (EKAKRALS) lines the ATP pocket. At Lys-326 the chain carries N6-acetyllysine. Lys-352 is covalently cross-linked (Glycyl lysine isopeptide (Lys-Gly) (interchain with G-Cter in SUMO2)). An N6-acetyllysine; alternate modification is found at Lys-353. A Glycyl lysine isopeptide (Lys-Gly) (interchain with G-Cter in SUMO1); alternate cross-link involves residue Lys-353. An ATP-binding site is contributed by 364 to 367 (GSTR). The interdomain linker stretch occupies residues 409 to 419 (QDTGDLVLLDV). Residues 420 to 500 (CPLTLGIETV…PRGVPQIEVT (81 aa)) form a substrate-binding (SBD) region. Lys-447 carries the post-translational modification N6-succinyllysine. At Arg-492 the chain carries Omega-N-methylarginine. The residue at position 518 (Thr-518) is an O-AMP-threonine; alternate. Phosphothreonine; alternate is present on Thr-518. Residue Lys-585 is modified to N6,N6,N6-trimethyllysine; by METTL21A; in vitro. The residue at position 585 (Lys-585) is an N6,N6-dimethyllysine; alternate. Position 585 is an N6-methyllysine; alternate (Lys-585). Lys-591 is modified (N6-methyllysine). The segment at 632 to 654 (SKLYGSAGPPPTGEEDTSEKDEL) is disordered. Phosphothreonine occurs at positions 643 and 648. Residues 644 to 654 (GEEDTSEKDEL) are compositionally biased toward acidic residues. Phosphoserine is present on Ser-649. Residues 651-654 (KDEL) carry the Prevents secretion from ER motif.

The protein belongs to the heat shock protein 70 family. As to quaternary structure, monomer and homooligomer; homooligomerization via the interdomain linker inactivates the chaperone activity and acts as a storage of HSPA5/BiP molecules. Interacts with DNAJC1 (via J domain). Component of an EIF2 complex at least composed of CELF1/CUGBP1, CALR, CALR3, EIF2S1, EIF2S2, HSP90B1 and HSPA5. Part of a large chaperone multiprotein complex comprising DNAJB11, HSP90B1, HSPA5, HYOU, PDIA2, PDIA4, PDIA6, PPIB, SDF2L1, UGGT1 and very small amounts of ERP29, but not, or at very low levels, CALR nor CANX. Interacts with TMEM132A and TRIM21. May form a complex with ERLEC1, OS9, SEL1L and SYVN1. Interacts with DNAJC10. Interacts with DNAJB9/ERdj4; leading to recruit HSPA5/BiP to ERN1/IRE1. Interacts with ERN1/IRE1 (via luminal domain); the interaction takes place following interaction with DNAJB9/ERdj4 and leads to inactivate ERN1/IRE1, the interaction also competitively inhibits ERN1 interaction with MANF. Interacts directly with MANF (via SAP domain); the interaction inhibits ATP binding to HSPA5/BiP and subsequent nucleotide exchange. Interacts with EIF2AK3/PERK (via luminal domain); interaction leads to inactivate EIF2AK3/PERK. Interacts with MX1. Interacts with METTL23. Interacts with CEMIP; the interaction induces calcium leakage from the endoplasmic reticulum and cell migration. Interacts with PCSK4 form; the interaction takes place in the endoplasmic reticulum. Interacts with CIPC. Interacts with CCDC88B (via C-terminus); the interaction opposes ERN1-mediated JNK activation, protecting against apoptosis. Interacts with INPP5K; necessary for INPP5K localization at the endoplasmic reticulum. Interacts with LOXL2; leading to activate the ERN1/IRE1-XBP1 pathway of the unfolded protein response. Interacts with CLU under stressed condition; interaction increases CLU protein stability; facilitates its retrotranslocation and redistribution to the mitochondria; cooperatively suppress stress-induced apoptosis by stabilizing mitochondrial membrane integrity. Interacts with CCDC47. Interacts with CLN3. Interacts with ELAPOR1; may regulate the function of HSPA5 in apoptosis and cell proliferation. Interacts with CASP7. Interacts with ILDR2; the interaction stabilizes ILDR2 expression. Interacts with ADAM7. Post-translationally, in unstressed cells, AMPylation at Thr-518 by FICD inactivates the chaperome activity: AMPylated form is locked in a relatively inert state and only weakly stimulated by J domain-containing proteins. In response to endoplasmic reticulum stress, de-AMPylation by the same protein, FICD, restores the chaperone activity.

The protein localises to the endoplasmic reticulum lumen. It is found in the melanosome. It localises to the cytoplasm. Its subcellular location is the cell surface. It catalyses the reaction ATP + H2O = ADP + phosphate + H(+). The chaperone activity is regulated by ATP-induced allosteric coupling of the nucleotide-binding (NBD) and substrate-binding (SBD) domains. In the ADP-bound and nucleotide-free (apo) states, the two domains have little interaction. In contrast, in the ATP-bound state the two domains are tightly coupled, which results in drastically accelerated kinetics in both binding and release of polypeptide substrates. J domain-containing co-chaperones (DNAJB9/ERdj4 or DNAJC10/ERdj5) stimulate the ATPase activity and are required for efficient substrate recognition by HSPA5/BiP. Homooligomerization inactivates participating HSPA5/BiP protomers and probably act as reservoirs to store HSPA5/BiP molecules when they are not needed by the cell. In terms of biological role, endoplasmic reticulum chaperone that plays a key role in protein folding and quality control in the endoplasmic reticulum lumen. Involved in the correct folding of proteins and degradation of misfolded proteins via its interaction with DNAJC10/ERdj5, probably to facilitate the release of DNAJC10/ERdj5 from its substrate. Acts as a key repressor of the EIF2AK3/PERK and ERN1/IRE1-mediated unfolded protein response (UPR). In the unstressed endoplasmic reticulum, recruited by DNAJB9/ERdj4 to the luminal region of ERN1/IRE1, leading to disrupt the dimerization of ERN1/IRE1, thereby inactivating ERN1/IRE1. Also binds and inactivates EIF2AK3/PERK in unstressed cells. Accumulation of misfolded protein in the endoplasmic reticulum causes release of HSPA5/BiP from ERN1/IRE1 and EIF2AK3/PERK, allowing their homodimerization and subsequent activation. Plays an auxiliary role in post-translational transport of small presecretory proteins across endoplasmic reticulum (ER). May function as an allosteric modulator for SEC61 channel-forming translocon complex, likely cooperating with SEC62 to enable the productive insertion of these precursors into SEC61 channel. Appears to specifically regulate translocation of precursors having inhibitory residues in their mature region that weaken channel gating. May also play a role in apoptosis and cell proliferation. This is Endoplasmic reticulum chaperone BiP from Cricetulus griseus (Chinese hamster).